A 129-amino-acid polypeptide reads, in one-letter code: Small ribosomal subunit protein uS8 (129 aa).

Belongs to the universal ribosomal protein uS8 family. In terms of assembly, part of the 30S ribosomal subunit.

Its function is as follows. One of the primary rRNA binding proteins, it binds directly to 16S rRNA central domain where it helps coordinate assembly of the platform of the 30S subunit. The chain is Small ribosomal subunit protein uS8 from Thermofilum pendens (strain DSM 2475 / Hrk 5).